Reading from the N-terminus, the 453-residue chain is Ethanolamine ammonia-lyase large subunit (453 aa).

Residues Arg-160–Gln-162 and Asn-193 contribute to the substrate site. Residues Pro-194 and Gln-246 each contribute to the adenosylcob(III)alamin site. Glu-287 lines the substrate pocket. Position 295 (Ser-295) interacts with adenosylcob(III)alamin. Asp-362 lines the substrate pocket. An adenosylcob(III)alamin-binding site is contributed by Met-401.

Belongs to the EutB family. As to quaternary structure, the basic unit is a heterodimer which dimerizes to form tetramers. The heterotetramers trimerize; 6 large subunits form a core ring with 6 small subunits projecting outwards. It depends on adenosylcob(III)alamin as a cofactor.

The protein resides in the bacterial microcompartment. It catalyses the reaction ethanolamine = acetaldehyde + NH4(+). The protein operates within amine and polyamine degradation; ethanolamine degradation. Functionally, catalyzes the deamination of various vicinal amino-alcohols to oxo compounds. It is spontaneously inactivated by its substrate and reactivated by EutA. May play a role in BMC assembly or maintenance. Expression of the eut operon allows this bacteria to use ethanolamine (EA) as a carbon, nitrogen and energy source. It relies on cobalamin (vitamin B12) both as a cofactor for the ethanolamine ammonia-lyase activity and to induce the operon. EA enhances bacterial survival in macrophages in a concentration-dependent manner, suggesting it is an important nutrient during infection. The chain is Ethanolamine ammonia-lyase large subunit from Salmonella typhimurium (strain LT2 / SGSC1412 / ATCC 700720).